Consider the following 186-residue polypeptide: ADP-ribosylation factor-like protein 8B (186 aa).

Positions 1–19 form an intramembrane region, note=Mediates targeting to membranes; it reads MLALISRLLDWFRSLFWKE. GTP contacts are provided by residues 29–35, 71–75, and 130–133; these read QYSGKTT, DIGGQ, and NKRD. K141 is covalently cross-linked (Glycyl lysine isopeptide (Lys-Gly) (interchain with G-Cter in ubiquitin)).

Belongs to the small GTPase superfamily. Arf family. In terms of assembly, interacts with tubulin. Interacts with BORCS5; recruits ARL8B to lysosomes. Interacts with VPS41; the interaction mediates the recruitment of the HOPS complex to lysosomes. Interacts (GTP-bound form) with PLEKHM2 (via RUN domain); the interaction is required to recruit the motor protein kinesin-1 on lysosomes. Interacts (GTP-bound form) with PLEKHM1 (via RUN domain); the interaction is required for PLEKHM1 localization to lysosomes and for ARL8B function in delivery and degradation of endocytic and autophagic cargo in lysosomes. PLEKHM1 and PLEKHM2 compete for interaction with ARL8B. Interacts (GTP-bound form) with RUFY1; the interaction is required for RUFY1 endosomal location. When GTP-bound, interacts with RUFY3 and RUFY4, but not with RUFY1, nor RUFY2. Post-translationally, ubiquitinated at Lys-141 by RNF167, leading to its degradation.

It is found in the late endosome membrane. It localises to the lysosome membrane. The protein resides in the cytoplasm. The protein localises to the cytoskeleton. Its subcellular location is the spindle. It is found in the cell projection. It localises to the axon. The protein resides in the synapse. The protein localises to the cytolytic granule membrane. Its subcellular location is the early endosome membrane. It catalyses the reaction GTP + H2O = GDP + phosphate + H(+). Functionally, small GTPase which cycles between active GTP-bound and inactive GDP-bound states. In its active state, binds to a variety of effector proteins playing a key role in the regulation of lysosomal positioning which is important for nutrient sensing, natural killer cell-mediated cytotoxicity and antigen presentation. Along with its effectors, orchestrates lysosomal transport and fusion. Localizes specifically to lysosomal membranes and mediates anterograde lysosomal motility by recruiting PLEKHM2, which in turn recruits the motor protein kinesin-1 on lysosomes. Required for lysosomal and cytolytic granule exocytosis. Critical factor involved in NK cell-mediated cytotoxicity. Drives the polarization of cytolytic granules and microtubule-organizing centers (MTOCs) toward the immune synapse between effector NK lymphocytes and target cells. In neurons, mediates the anterograde axonal long-range transport of presynaptic lysosome-related vesicles required for presynaptic biogenesis and synaptic function. Also acts as a regulator of endosome to lysosome trafficking pathways of special significance for host defense. Recruits RUFY1 onto early endosomes regulating endosomes to trans-Golgi network proteins retrieval. Regulates cargo trafficking to lysosomes by binding to PLEKHM1 and recruiting the HOPS subunit VPS41, resulting in functional assembly of the HOPS complex on lysosomal membranes. Plays an important role in cargo delivery to lysosomes for antigen presentation and microbial killing. Directs the intersection of CD1d with lipid antigens in lysosomes, and plays a role in intersecting phagosomes with lysosomes to generate phagolysosomes that kill microbes. Involved in the process of MHC II presentation. Regulates the delivery of antigens to lysosomes and the formation of MHC II-peptide complexes through the recruitment of the HOPS complex to lysosomes allowing the fusion of late endosomes to lysosomes. May play a role in chromosome segregation. The polypeptide is ADP-ribosylation factor-like protein 8B (ARL8B) (Bos taurus (Bovine)).